We begin with the raw amino-acid sequence, 241 residues long: MGRGRVQLKRIENKINRQVTFSKRRSGLLKKAHEISVLCDAEVALVIFSSKGKLFEYSTDSCMEKILERYDRYLYSDKQLVGRDISQSENWVLEHAKLKARVEVLEKNKRNFMGEDLDSLSLKELQSLEHQLHAAIKSIRSRKNQAMFESISALQKKDKVLQDHNNALLKKIKEREKNTVHQEVQLIQCSNNSSILQPQYCLTSSRDGFVGRVEGENEGASSLAEPNSLLPAWMLRPTTNE.

Residues 3-57 (RGRVQLKRIENKINRQVTFSKRRSGLLKKAHEISVLCDAEVALVIFSSKGKLFEY) form the MADS-box domain. The 91-residue stretch at 88-178 (SENWVLEHAK…LKKIKEREKN (91 aa)) folds into the K-box domain.

It localises to the nucleus. In terms of biological role, probable transcription factor. This is Agamous-like MADS-box protein AGL8 homolog (AGL8) from Sinapis alba (White mustard).